The primary structure comprises 600 residues: Elongation factor 4 (600 aa).

The region spanning 4 to 186 (SKIRNFSIIA…EIVKKIPAPQ (183 aa)) is the tr-type G domain. GTP-binding positions include 16–21 (DHGKST) and 133–136 (NKID).

This sequence belongs to the TRAFAC class translation factor GTPase superfamily. Classic translation factor GTPase family. LepA subfamily.

It is found in the cell inner membrane. It catalyses the reaction GTP + H2O = GDP + phosphate + H(+). Functionally, required for accurate and efficient protein synthesis under certain stress conditions. May act as a fidelity factor of the translation reaction, by catalyzing a one-codon backward translocation of tRNAs on improperly translocated ribosomes. Back-translocation proceeds from a post-translocation (POST) complex to a pre-translocation (PRE) complex, thus giving elongation factor G a second chance to translocate the tRNAs correctly. Binds to ribosomes in a GTP-dependent manner. The protein is Elongation factor 4 of Trichlorobacter lovleyi (strain ATCC BAA-1151 / DSM 17278 / SZ) (Geobacter lovleyi).